A 148-amino-acid chain; its full sequence is Lysozyme C (148 aa).

The signal sequence occupies residues 1 to 18 (MKVLILLGLVLLSVMVQG). The C-type lysozyme domain occupies 19 to 148 (KVFERCELAR…VSQYIQGCGV (130 aa)). 4 cysteine pairs are disulfide-bonded: cysteine 24–cysteine 146, cysteine 48–cysteine 134, cysteine 83–cysteine 99, and cysteine 95–cysteine 113. Catalysis depends on residues glutamate 53 and aspartate 71.

It belongs to the glycosyl hydrolase 22 family. In terms of assembly, monomer.

The protein localises to the secreted. The enzyme catalyses Hydrolysis of (1-&gt;4)-beta-linkages between N-acetylmuramic acid and N-acetyl-D-glucosamine residues in a peptidoglycan and between N-acetyl-D-glucosamine residues in chitodextrins.. Functionally, lysozymes have primarily a bacteriolytic function; those in tissues and body fluids are associated with the monocyte-macrophage system and enhance the activity of immunoagents. The chain is Lysozyme C (LYZ) from Saguinus oedipus (Cotton-top tamarin).